A 645-amino-acid chain; its full sequence is Ethylene response sensor 2 (645 aa).

Transmembrane regions (helical) follow at residues 5 to 25 (LLVQ…VTAA), 54 to 74 (VGDF…VYFV), 86 to 106 (VVCE…LAGF), and 125 to 145 (LTGI…PLLL). Residues Cys97 and His101 each contribute to the Cu cation site. Residues 190 to 346 (DRHTILYTTL…VVADQVAVAI (157 aa)) enclose the GAF domain. One can recognise a Histidine kinase domain in the interval 389 to 623 (MMSDAMRCPV…VFRFQLRRSM (235 aa)).

Belongs to the ethylene receptor family. As to quaternary structure, heteromer with ETR1. The cofactor is Cu cation. Autophosphorylated predominantly on Ser residues. In terms of tissue distribution, expressed in etiolated seedlings, leaves, roots and stems. Highly expressed in flowers, stamens, pollen cells, tapetum cells, carpels and ovules.

It is found in the endoplasmic reticulum membrane. Its function is as follows. Ethylene receptor related to bacterial two-component regulators. Acts as a redundant negative regulator of ethylene signaling. The protein is Ethylene response sensor 2 (ERS2) of Arabidopsis thaliana (Mouse-ear cress).